The following is a 391-amino-acid chain: Acetate kinase (391 aa).

Position 4 (Asn-4) interacts with Mg(2+). Lys-11 serves as a coordination point for ATP. Substrate is bound at residue Arg-85. Asp-142 functions as the Proton donor/acceptor in the catalytic mechanism. Residues 202–206 (HLGNG), 277–279 (DLR), and 325–329 (GIGEN) each bind ATP. Glu-378 is a Mg(2+) binding site.

This sequence belongs to the acetokinase family. As to quaternary structure, homodimer. Mg(2+) serves as cofactor. Mn(2+) is required as a cofactor.

It is found in the cytoplasm. The enzyme catalyses acetate + ATP = acetyl phosphate + ADP. It functions in the pathway metabolic intermediate biosynthesis; acetyl-CoA biosynthesis; acetyl-CoA from acetate: step 1/2. Functionally, catalyzes the formation of acetyl phosphate from acetate and ATP. Can also catalyze the reverse reaction. This is Acetate kinase from Halalkalibacterium halodurans (strain ATCC BAA-125 / DSM 18197 / FERM 7344 / JCM 9153 / C-125) (Bacillus halodurans).